The sequence spans 81 residues: MAVRIRLKRMGAKNNPFYRIVVADSRSPRDGKTIDEIGYYNPLKNPADIKVDVEKAKKWLSNGAQPTDTVKILLKKVGVIE.

The protein belongs to the bacterial ribosomal protein bS16 family.

The protein is Small ribosomal subunit protein bS16 of Caldicellulosiruptor saccharolyticus (strain ATCC 43494 / DSM 8903 / Tp8T 6331).